Here is a 723-residue protein sequence, read N- to C-terminus: Delta-like protein 1 (723 aa).

The N-terminal stretch at 1-17 (MGSRCALALAVLSALLC) is a signal peptide. The Extracellular portion of the chain corresponds to 18-545 (QVWSSGVFEL…LEGQGGPFPW (528 aa)). In terms of domain architecture, DSL spans 177–221 (FVCDEHYYGEGCSVFCRPRDDAFGHFTCGERGEKVCNPGWKGPYC). 27 cysteine pairs are disulfide-bonded: cysteine 179–cysteine 188, cysteine 192–cysteine 204, cysteine 212–cysteine 221, cysteine 226–cysteine 237, cysteine 230–cysteine 243, cysteine 245–cysteine 254, cysteine 257–cysteine 268, cysteine 263–cysteine 274, cysteine 276–cysteine 285, cysteine 292–cysteine 304, cysteine 298–cysteine 314, cysteine 316–cysteine 325, cysteine 332–cysteine 343, cysteine 337–cysteine 352, cysteine 354–cysteine 363, cysteine 370–cysteine 381, cysteine 375–cysteine 391, cysteine 393–cysteine 402, cysteine 409–cysteine 420, cysteine 414–cysteine 429, cysteine 431–cysteine 440, cysteine 447–cysteine 458, cysteine 452–cysteine 467, cysteine 469–cysteine 478, cysteine 485–cysteine 496, cysteine 490–cysteine 505, and cysteine 507–cysteine 516. EGF-like domains lie at 226 to 254 (CLPG…GRYC), 257 to 285 (CIRY…GLFC), and 292 to 325 (CTHH…GATC). The EGF-like 4; calcium-binding domain maps to 332–363 (CDPSPCKNGGSCTDLENSYSCTCPPGFYGKIC). EGF-like domains follow at residues 370 to 402 (CADG…GFNC) and 409 to 440 (CSSS…GRHC). The EGF-like 7; calcium-binding domain occupies 447-478 (CASSPCANGGTCRDGVNDFSCTCPPGYTGRNC). Asparagine 477 is a glycosylation site (N-linked (GlcNAc...) asparagine). Residues 485 to 516 (CEHAPCHNGATCHERGHRYVCECARGYGGPNC) form the EGF-like 8 domain. A helical membrane pass occupies residues 546–568 (VAVCAGVILVLMLLLGCAAVVVC). The Cytoplasmic segment spans residues 569 to 723 (VRLRLQKHRP…KDECVIATEV (155 aa)). Residue lysine 613 forms a Glycyl lysine isopeptide (Lys-Gly) (interchain with G-Cter in ubiquitin) linkage. Basic and acidic residues predominate over residues 653–664 (AVRDAHSKRDTK). The disordered stretch occupies residues 653 to 702 (AVRDAHSKRDTKCQPQGSSGEEKGTPTTLRGGEASERKRPDSGCSTSKDT). Position 694 is a phosphoserine; by PKB (serine 694). Serine 697 bears the Phosphoserine mark. Residues 720 to 723 (ATEV) form an interaction with MAGI1 region.

Homodimer. Interacts with TJP1. Interacts with MAGI1 (via PDZ domain); forms a complex with CTNNB1 and CDH2 and promotes recruitment to the adherens junction and stabilization on the cell surface. Interacts with PSEN1; undergoes a presenilin-dependent gamma-secretase cleavage that releases a Dll1-intracellular form. Interacts with MFAP5. Interacts with MIB1. Interacts with NEURL1B; leads to ubiquitination. Interacts with NEURL1. Interacts with SYNJ2BP; enhances DLL1 protein stability, and promotes Notch signaling in endothelial cells. Interacts with MAGI1, MAGI2, MAGI3 and MPDZ. Interacts (via ubiquitin) with EPN1 (via IUM domain); binding with NOTCH1 attached to neighboring cell, promotes ligand ubiquitination and EPN1 interaction, leading to NECD transendocytosis and Notch signaling. Interacts with NOTCH1. Interacts with NOTCH2NLB; leading to promote Notch signaling pathway in a cell-autonomous manner through inhibition of cis DLL1-NOTCH2 interactions. In terms of processing, ubiquitinated by MIB (MIB1 or MIB2), leading to its endocytosis and subsequent degradation. Ubiquitinated; promotes recycling back to the plasma membrane and confers a strong affinity for NOTCH1. Multi-ubiquitination of Lys-613 by MIB1 promotes both cis and trans-interaction with NOTCH1, as well as activation of Notch signaling. Ubiquitinated by NEURL1B. Post-translationally, phosphorylated in a membrane association-dependent manner. Phosphorylation at Ser-697 requires the presence of Ser-694, whereas phosphorylation at Ser-694 occurs independently of the other site. Phosphorylation is required for full ligand activity in vitro and affects surface presentation, ectodomain shedding, and endocytosis. O-fucosylated. Can be elongated to a disaccharide by MFNG. As to expression, expressed in heart and pancreas, with lower expression in brain and muscle and almost no expression in placenta, lung, liver and kidney.

The protein resides in the apical cell membrane. Its subcellular location is the cell junction. It localises to the adherens junction. The protein localises to the membrane raft. Transmembrane ligand protein of NOTCH1, NOTCH2 and NOTCH3 receptors that binds the extracellular domain (ECD) of Notch receptor in a cis and trans fashion manner. Following transinteraction, ligand cells produce mechanical force that depends of a clathrin-mediated endocytosis, requiring ligand ubiquitination, EPN1 interaction, and actin polymerisation; these events promote Notch receptor extracellular domain (NECD) transendocytosis and triggers Notch signaling through induction of cleavage, hyperphosphorylation, and nuclear accumulation of the intracellular domain of Notch receptors (NICD). Is required for embryonic development and maintenance of adult stem cells in many different tissues and immune systeme; the DLL1-induced Notch signaling is mediated through an intercellular communication that regulates cell lineage, cell specification, cell patterning and morphogenesis through effects on differentiation and proliferation. Plays a role in brain development at different level, namely by regulating neuronal differentiation of neural precursor cells via cell-cell interaction, most likely through the lateral inhibitory system in an endogenous level dependent-manner. During neocortex development, Dll1-Notch signaling transmission is mediated by dynamic interactions between intermediate neurogenic progenitors and radial glia; the cell-cell interactions are mediated via dynamic and transient elongation processes, likely to reactivate/maintain Notch activity in neighboring progenitors, and coordinate progenitor cell division and differentiation across radial and zonal boundaries. During cerebellar development, regulates Bergmann glial monolayer formation and its morphological maturation through a Notch signaling pathway. At the retina and spinal cord level, regulates neurogenesis by preventing the premature differentiation of neural progenitors and also by maintaining progenitors in spinal cord through Notch signaling pathway. Also controls neurogenesis of the neural tube in a progenitor domain-specific fashion along the dorsoventral axis. Maintains quiescence of neural stem cells and plays a role as a fate determinant that segregates asymmetrically to one daughter cell during neural stem cells mitosis, resulting in neuronal differentiation in Dll1-inheriting cell. Plays a role in immune systeme development, namely the development of all T-cells and marginal zone (MZ) B-cells. Blocks the differentiation of progenitor cells into the B-cell lineage while promoting the emergence of a population of cells with the characteristics of a T-cell/NK-cell precursor. Also plays a role during muscle development. During early development, inhibits myoblasts differentiation from the medial dermomyotomal lip and later regulates progenitor cell differentiation. Directly modulates cell adhesion and basal lamina formation in satellite cells through Notch signaling. Maintains myogenic progenitors pool by suppressing differentiation through down-regulation of MYOD1 and is required for satellite cell homing and PAX7 expression. During craniofacial and trunk myogenesis suppresses differentiation of cranial mesoderm-derived and somite-derived muscle via MYOD1 regulation but in cranial mesoderm-derived progenitors, is neither required for satellite cell homing nor for PAX7 expression. Also plays a role during pancreatic cell development. During type B pancreatic cell development, may be involved in the initiation of proximodistal patterning in the early pancreatic epithelium. Stimulates multipotent pancreatic progenitor cells proliferation and pancreatic growth by maintaining HES1 expression and PTF1A protein levels. During fetal stages of development, is required to maintain arterial identity and the responsiveness of arterial endothelial cells for VEGFA through regulation of KDR activation and NRP1 expression. Controls sprouting angiogenesis and subsequent vertical branch formation through regulation on tip cell differentiation. Negatively regulates goblet cell differentiation in intestine and controls secretory fat commitment through lateral inhibition in small intestine. Plays a role during inner ear development; negatively regulates auditory hair cell differentiation. Plays a role during nephron development through Notch signaling pathway. Regulates growth, blood pressure and energy homeostasis. The chain is Delta-like protein 1 from Homo sapiens (Human).